The sequence spans 325 residues: Acetyl-coenzyme A carboxylase carboxyl transferase subunit alpha (325 aa).

A CoA carboxyltransferase C-terminal domain is found at 35-292 (EIEKLEARLT…DRVLRASLKQ (258 aa)).

It belongs to the AccA family. As to quaternary structure, acetyl-CoA carboxylase is a heterohexamer composed of biotin carboxyl carrier protein (AccB), biotin carboxylase (AccC) and two subunits each of ACCase subunit alpha (AccA) and ACCase subunit beta (AccD).

It localises to the cytoplasm. The enzyme catalyses N(6)-carboxybiotinyl-L-lysyl-[protein] + acetyl-CoA = N(6)-biotinyl-L-lysyl-[protein] + malonyl-CoA. It participates in lipid metabolism; malonyl-CoA biosynthesis; malonyl-CoA from acetyl-CoA: step 1/1. Functionally, component of the acetyl coenzyme A carboxylase (ACC) complex. First, biotin carboxylase catalyzes the carboxylation of biotin on its carrier protein (BCCP) and then the CO(2) group is transferred by the carboxyltransferase to acetyl-CoA to form malonyl-CoA. The protein is Acetyl-coenzyme A carboxylase carboxyl transferase subunit alpha of Geobacillus thermodenitrificans (strain NG80-2).